The sequence spans 200 residues: Small ribosomal subunit protein uS4 (200 aa).

The tract at residues threonine 22–arginine 42 is disordered. An S4 RNA-binding domain is found at serine 92 to lysine 152.

This sequence belongs to the universal ribosomal protein uS4 family. Part of the 30S ribosomal subunit. Contacts protein S5. The interaction surface between S4 and S5 is involved in control of translational fidelity.

Its function is as follows. One of the primary rRNA binding proteins, it binds directly to 16S rRNA where it nucleates assembly of the body of the 30S subunit. Functionally, with S5 and S12 plays an important role in translational accuracy. The chain is Small ribosomal subunit protein uS4 (rpsD) from Geobacillus stearothermophilus (Bacillus stearothermophilus).